Reading from the N-terminus, the 137-residue chain is MLQPKRTKYRKVHKGRNEGLSWSANAVSFGEYGLKATAHGQLTARQIEAARRSISRYVKRGGKMWIRVFPDKPITKKPIEVRMGSGKGNVEYWVAQIQPGRMIYEIEGVTEDVAREAFRLAAAKLSVTTTFVTRTVR.

This sequence belongs to the universal ribosomal protein uL16 family. In terms of assembly, part of the 50S ribosomal subunit.

Binds 23S rRNA and is also seen to make contacts with the A and possibly P site tRNAs. The polypeptide is Large ribosomal subunit protein uL16 (Stenotrophomonas maltophilia (strain R551-3)).